The primary structure comprises 199 residues: Shikimate kinase (199 aa).

34–39 (GAGKTA) contacts ATP. Thr-38 provides a ligand contact to Mg(2+). 3 residues coordinate substrate: Asp-56, Arg-80, and Gly-102. Position 140 (Arg-140) interacts with ATP. Arg-159 contacts substrate.

It belongs to the shikimate kinase family. Monomer. Mg(2+) is required as a cofactor.

The protein resides in the cytoplasm. It catalyses the reaction shikimate + ATP = 3-phosphoshikimate + ADP + H(+). The protein operates within metabolic intermediate biosynthesis; chorismate biosynthesis; chorismate from D-erythrose 4-phosphate and phosphoenolpyruvate: step 5/7. Catalyzes the specific phosphorylation of the 3-hydroxyl group of shikimic acid using ATP as a cosubstrate. The protein is Shikimate kinase of Cereibacter sphaeroides (strain ATCC 17023 / DSM 158 / JCM 6121 / CCUG 31486 / LMG 2827 / NBRC 12203 / NCIMB 8253 / ATH 2.4.1.) (Rhodobacter sphaeroides).